The sequence spans 130 residues: DNA-directed RNA polymerase subunit omega (130 aa).

Disordered regions lie at residues 80–99 and 110–130; these read PEPD…DADD and EELL…EEDE. Residues 110-124 are compositionally biased toward basic and acidic residues; it reads EELLKGLEGLAPREE.

Belongs to the RNA polymerase subunit omega family. As to quaternary structure, the RNAP catalytic core consists of 2 alpha, 1 beta, 1 beta' and 1 omega subunit. When a sigma factor is associated with the core the holoenzyme is formed, which can initiate transcription.

It carries out the reaction RNA(n) + a ribonucleoside 5'-triphosphate = RNA(n+1) + diphosphate. Functionally, promotes RNA polymerase assembly. Latches the N- and C-terminal regions of the beta' subunit thereby facilitating its interaction with the beta and alpha subunits. This Nitrobacter hamburgensis (strain DSM 10229 / NCIMB 13809 / X14) protein is DNA-directed RNA polymerase subunit omega.